The following is a 159-amino-acid chain: Globin CTT-W (159 aa).

The N-terminal stretch at 1–16 (MKFLVILTLCIAGAIA) is a signal peptide. Residues 17 to 159 (HCDKAPFIKA…HHAIVYSILE (143 aa)) form the Globin domain. His-73 and His-108 together coordinate heme b.

This sequence belongs to the globin family.

The protein is Globin CTT-W (CTT-W) of Chironomus thummi piger (Midge).